Here is a 385-residue protein sequence, read N- to C-terminus: S-adenosylmethionine synthase (385 aa).

H16 provides a ligand contact to ATP. D18 is a binding site for Mg(2+). E44 is a K(+) binding site. L-methionine contacts are provided by E57 and Q100. Positions 100–110 are flexible loop; that stretch reads QSPDINQGVDR. ATP is bound by residues 164 to 166, 230 to 231, D239, 245 to 246, A262, and K266; these read DGK, KF, and RK. D239 is an L-methionine binding site. L-methionine is bound at residue K270.

Belongs to the AdoMet synthase family. In terms of assembly, homotetramer; dimer of dimers. Requires Mg(2+) as cofactor. The cofactor is K(+).

It is found in the cytoplasm. The catalysed reaction is L-methionine + ATP + H2O = S-adenosyl-L-methionine + phosphate + diphosphate. The protein operates within amino-acid biosynthesis; S-adenosyl-L-methionine biosynthesis; S-adenosyl-L-methionine from L-methionine: step 1/1. Functionally, catalyzes the formation of S-adenosylmethionine (AdoMet) from methionine and ATP. The overall synthetic reaction is composed of two sequential steps, AdoMet formation and the subsequent tripolyphosphate hydrolysis which occurs prior to release of AdoMet from the enzyme. The sequence is that of S-adenosylmethionine synthase from Helicobacter pylori (strain G27).